A 234-amino-acid polypeptide reads, in one-letter code: Synaptogyrin-4 (234 aa).

Residues 18–169 (FLRRPKTITR…QAYLAFQDLR (152 aa)) form the MARVEL domain. Transmembrane regions (helical) follow at residues 25 to 45 (ITRVFEGVFSLIVFSSLLTDG), 66 to 86 (CSFAVGAGFLAFLSCLAFLVL), 104 to 124 (LLDFILAVLWAVVWFMGFCFL), and 145 to 165 (AAIAFTFFSILVWIFQAYLAF).

It belongs to the synaptogyrin family.

Its subcellular location is the membrane. This is Synaptogyrin-4 (SYNGR4) from Homo sapiens (Human).